Consider the following 347-residue polypeptide: Protein-glutamate methylesterase/protein-glutamine glutaminase 2 (347 aa).

The Response regulatory domain maps to 2 to 119 (RVMIVDDSAV…LGGADLYRKD (118 aa)). Position 52 is a 4-aspartylphosphate (Asp52). Positions 131 to 153 (AARPAPPQAAPRPTLAPPSSDPA) are disordered. Pro residues predominate over residues 134 to 150 (PAPPQAAPRPTLAPPSS). In terms of domain architecture, CheB-type methylesterase spans 152–346 (PAGPIEAVVV…PYIASRARSV (195 aa)). Active-site residues include Ser164, His191, and Asp288.

It belongs to the CheB family. Post-translationally, phosphorylated by CheA. Phosphorylation of the N-terminal regulatory domain activates the methylesterase activity.

It localises to the cytoplasm. The enzyme catalyses [protein]-L-glutamate 5-O-methyl ester + H2O = L-glutamyl-[protein] + methanol + H(+). It carries out the reaction L-glutaminyl-[protein] + H2O = L-glutamyl-[protein] + NH4(+). Functionally, involved in chemotaxis. Part of a chemotaxis signal transduction system that modulates chemotaxis in response to various stimuli. Catalyzes the demethylation of specific methylglutamate residues introduced into the chemoreceptors (methyl-accepting chemotaxis proteins or MCP) by CheR. Also mediates the irreversible deamidation of specific glutamine residues to glutamic acid. The chain is Protein-glutamate methylesterase/protein-glutamine glutaminase 2 from Caulobacter vibrioides (strain ATCC 19089 / CIP 103742 / CB 15) (Caulobacter crescentus).